The following is a 232-amino-acid chain: Biosynthetic peptidoglycan transglycosylase (232 aa).

The helical transmembrane segment at 14–34 threads the bilayer; sequence AAVALVLLYQLWIFAHVLWWI.

The protein belongs to the glycosyltransferase 51 family.

It localises to the cell inner membrane. It carries out the reaction [GlcNAc-(1-&gt;4)-Mur2Ac(oyl-L-Ala-gamma-D-Glu-L-Lys-D-Ala-D-Ala)](n)-di-trans,octa-cis-undecaprenyl diphosphate + beta-D-GlcNAc-(1-&gt;4)-Mur2Ac(oyl-L-Ala-gamma-D-Glu-L-Lys-D-Ala-D-Ala)-di-trans,octa-cis-undecaprenyl diphosphate = [GlcNAc-(1-&gt;4)-Mur2Ac(oyl-L-Ala-gamma-D-Glu-L-Lys-D-Ala-D-Ala)](n+1)-di-trans,octa-cis-undecaprenyl diphosphate + di-trans,octa-cis-undecaprenyl diphosphate + H(+). The protein operates within cell wall biogenesis; peptidoglycan biosynthesis. Its function is as follows. Peptidoglycan polymerase that catalyzes glycan chain elongation from lipid-linked precursors. This chain is Biosynthetic peptidoglycan transglycosylase, found in Thiobacillus denitrificans (strain ATCC 25259 / T1).